The sequence spans 303 residues: US1 protein (303 aa).

Residues 230–284 (IPAPGRPLPRRRPSEGGMRAPRRRSRAPAPARSTAAAATPPRPGDPRAPAARRAG) are disordered. A compositionally biased stretch (low complexity) spans 256-268 (APAPARSTAAAAT).

It belongs to the herpesviridae US2 family.

This chain is US1 protein (US1), found in Equine herpesvirus 1 (strain Kentucky A) (EHV-1).